The sequence spans 160 residues: Cytochrome b6-f complex subunit 4 (160 aa).

3 helical membrane-spanning segments follow: residues 36-56 (LLYMFPVCILGTIACNVGLAV), 95-115 (LLGVLLMASVPVGLITVPFIE), and 131-151 (TIFLIGTVVAVWLGIGATLPI).

It belongs to the cytochrome b family. PetD subfamily. The 4 large subunits of the cytochrome b6-f complex are cytochrome b6, subunit IV (17 kDa polypeptide, petD), cytochrome f and the Rieske protein, while the 4 small subunits are petG, petL, petM and petN. The complex functions as a dimer.

It localises to the plastid. It is found in the chloroplast thylakoid membrane. Component of the cytochrome b6-f complex, which mediates electron transfer between photosystem II (PSII) and photosystem I (PSI), cyclic electron flow around PSI, and state transitions. In Staurastrum punctulatum (Green alga), this protein is Cytochrome b6-f complex subunit 4.